The following is a 146-amino-acid chain: Putative nickel-responsive regulator 1 (146 aa).

Ni(2+)-binding residues include histidine 81, histidine 92, tyrosine 94, and cysteine 100.

It belongs to the transcriptional regulatory CopG/NikR family. It depends on Ni(2+) as a cofactor.

Functionally, transcriptional regulator. The sequence is that of Putative nickel-responsive regulator 1 from Methanosarcina mazei (strain ATCC BAA-159 / DSM 3647 / Goe1 / Go1 / JCM 11833 / OCM 88) (Methanosarcina frisia).